The following is a 321-amino-acid chain: MAAAEAGGDDARCVRLSAERAQALLADVDTLLFDCDGVLWRGETAVPGAPEALRALRARGKRLGFITNNSSKTRAAYAEKLRRLGFGGPAGPGASLEVFGTAYCTALYLRQRLAGAPAPKAYVLGSPALAAELEAVGVASVGVGPEPLQGEGPGDWLHAPLEPDVRAVVVGFDPHFSYMKLTKALRYLQQPGCLLVGTNMDNRLPLENGRFIAGTGCLVRAVEMAAQRQADIIGKPSRFIFDCVSQEYGINPERTVMVGDRLDTDILLGATCGLKTILTLTGVSTLGDVKNNQESDCVSKKKMVPDFYVDSIADLLPALQG.

The Nucleophile role is filled by aspartate 34. Residues aspartate 34, aspartate 36, and aspartate 260 each contribute to the Mg(2+) site. Aspartate 36 functions as the Proton donor in the catalytic mechanism.

The protein belongs to the HAD-like hydrolase superfamily. CbbY/CbbZ/Gph/YieH family. Homodimer. The cofactor is Mg(2+). In terms of tissue distribution, detected in all tissues including red cells, lymphocytes and cultured fibroblasts (at protein level). The highest activities occur in skeletal muscle and cardiac muscle.

It carries out the reaction O-phospho-L-tyrosyl-[protein] + H2O = L-tyrosyl-[protein] + phosphate. The catalysed reaction is sn-glycerol 1-phosphate + H2O = glycerol + phosphate. The enzyme catalyses sn-glycerol 3-phosphate + H2O = glycerol + phosphate. Glycerol-3-phosphate phosphatase hydrolyzing glycerol-3-phosphate into glycerol. Thereby, regulates the cellular levels of glycerol-3-phosphate a metabolic intermediate of glucose, lipid and energy metabolism. Was also shown to have a 2-phosphoglycolate phosphatase activity and a tyrosine-protein phosphatase activity. However, their physiological relevance is unclear. In vitro, also has a phosphatase activity toward ADP, ATP, GDP and GTP. In Homo sapiens (Human), this protein is Glycerol-3-phosphate phosphatase.